Here is a 615-residue protein sequence, read N- to C-terminus: DNA mismatch repair protein MutL (615 aa).

Positions 369 to 397 (REPVAPRYTPAPASGSRPAAPWPNAQPGY) are disordered. A compositionally biased stretch (low complexity) spans 378–391 (PAPASGSRPAAPWP).

This sequence belongs to the DNA mismatch repair MutL/HexB family.

Functionally, this protein is involved in the repair of mismatches in DNA. It is required for dam-dependent methyl-directed DNA mismatch repair. May act as a 'molecular matchmaker', a protein that promotes the formation of a stable complex between two or more DNA-binding proteins in an ATP-dependent manner without itself being part of a final effector complex. This Escherichia coli (strain SMS-3-5 / SECEC) protein is DNA mismatch repair protein MutL.